The chain runs to 327 residues: Undecaprenyl-phosphate 4-deoxy-4-formamido-L-arabinose transferase (327 aa).

Transmembrane regions (helical) follow at residues 236-256 (LSIF…LLVV) and 270-290 (VFML…GMGL).

This sequence belongs to the glycosyltransferase 2 family.

The protein resides in the cell inner membrane. It carries out the reaction UDP-4-deoxy-4-formamido-beta-L-arabinose + di-trans,octa-cis-undecaprenyl phosphate = 4-deoxy-4-formamido-alpha-L-arabinopyranosyl di-trans,octa-cis-undecaprenyl phosphate + UDP. It functions in the pathway glycolipid biosynthesis; 4-amino-4-deoxy-alpha-L-arabinose undecaprenyl phosphate biosynthesis; 4-amino-4-deoxy-alpha-L-arabinose undecaprenyl phosphate from UDP-4-deoxy-4-formamido-beta-L-arabinose and undecaprenyl phosphate: step 1/2. It participates in bacterial outer membrane biogenesis; lipopolysaccharide biosynthesis. In terms of biological role, catalyzes the transfer of 4-deoxy-4-formamido-L-arabinose from UDP to undecaprenyl phosphate. The modified arabinose is attached to lipid A and is required for resistance to polymyxin and cationic antimicrobial peptides. The chain is Undecaprenyl-phosphate 4-deoxy-4-formamido-L-arabinose transferase from Klebsiella pneumoniae (strain 342).